The chain runs to 675 residues: E3 ubiquitin-protein ligase COP1 (675 aa).

The disordered stretch occupies residues 1–40 (MEEISTDPVVPAVKPDPRTSSVGEGANRHENDDGGSGGSE). Residues C52, C55, C67, H69, C72, C75, C86, and C89 each coordinate Zn(2+). An RING-type zinc finger spans residues 52–90 (CPICMQIIKDAFLTACGHSFCYMCIITHLRNKSDCPCCS). The segment at 67-177 (CGHSFCYMCI…LDFLHCLRKQ (111 aa)) is CLS (cytoplasmic localization signal). Residues 120–177 (ASPLDQFREALQRGCDVSIKEVDNLLTLLAERKRKMEQEEAERNMQILLDFLHCLRKQ) form an SNLS (subnuclear localization signal) region. Positions 134 to 201 (CDVSIKEVDN…IKEDINAVER (68 aa)) form a coiled coil. Residues 261-290 (EGKAQGSSHGLPKKDALSGSDSQSLNQSTV) form a disordered region. The span at 279 to 290 (GSDSQSLNQSTV) shows a compositional bias: polar residues. Positions 294-317 (RKKRIHAQFNDLQECYLQKRRQLA) match the Bipartite nuclear localization signal motif. WD repeat units follow at residues 369–408 (HSANIVSSIEFDRDDELFATAGVSRCIKVFDFSSVVNEPA), 418–458 (STRS…SLME), 461–501 (EHEK…SVIN), 503–543 (DMKA…QPLH), 547–585 (GHKKAVSYVKFLSNNELASASTDSTLRLWDVKDNLPVRT), 588–627 (GHTNEKNFVGLTVNSEYLACGSETNEVYVYHKEITRPVTS), and 642–675 (AGSYFISAVCWKSDSPTMLTANSQGTIKVLVLAA). The tract at residues 593 to 595 (KNF) is binding of human TRIB1 COP1-binding-motif.

Homodimer. Interacts with HY5, HYH, BBX24/STO, BBX25/STH, CIP8, COP10, SPA1, SPA2, SPA3, SPA4 and UVR8 and phosphorylated PHYA. Light induces dissociation of the SPA1/COP1 complex. Interacts with HRT/RPP8 and triggers it to the 26s proteasome. Binds to CRY2; this competitive interaction prevents triggering to proteasome of other binding proteins. Binds to SHW1 in the nucleus. Bonds to CIP7. Interacts with CSU2. Binds to CIP1. Interacts directly with DHU1. Associates to UNE10/PIF8. Binds directly to PCH1 and PCHL. Post-translationally, autoubiquitinated.

It is found in the nucleus. The protein resides in the cytoplasm. The catalysed reaction is S-ubiquitinyl-[E2 ubiquitin-conjugating enzyme]-L-cysteine + [acceptor protein]-L-lysine = [E2 ubiquitin-conjugating enzyme]-L-cysteine + N(6)-ubiquitinyl-[acceptor protein]-L-lysine.. The protein operates within protein modification; protein ubiquitination. Functionally, E3 ubiquitin-protein ligase that acts as a repressor of photomorphogenesis and as an activator of etiolation in darkness. E3 ubiquitin ligases accept ubiquitin from an E2 ubiquitin-conjugating enzyme in the form of a thioester and then directly transfers the ubiquitin to targeted substrates. Represses photomorphogenesis in darkness by mediating ubiquitination and subsequent proteasomal degradation of light-induced transcription factors such as HY5, HYH and LAF1. Down-regulates MYB21, probably via ubiquitination process. Light stimuli abrogate the repression of photomorphogenesis, possibly due to its localization to the cytoplasm. Could play a role in switching between skotomorphogenetic and photomorphogenetic pathways. Mediates the ubiquitination-dependent degradation of HY5 in the darkness during seedling development (e.g. hypocotyl growth). Represses CIP7 in darkness. Triggers ubiquitination and subsequent protein degradation of UNE10/PIF8, PCH1 and PCHL in the dark. The polypeptide is E3 ubiquitin-protein ligase COP1 (Arabidopsis thaliana (Mouse-ear cress)).